Here is a 919-residue protein sequence, read N- to C-terminus: Aminodeoxychorismate synthase, chloroplastic (919 aa).

The transit peptide at 1–45 (MNMNFSFCSTSSELSYPSENVLRFSVASRLFSPKWKKSFISLPCR) directs the protein to the chloroplast. The Glutamine amidotransferase type-1 domain maps to 86 to 342 (RTLLIDNYDS…KDITVNYWSR (257 aa)). The Nucleophile role is filled by C172. Catalysis depends on residues H316 and E318. A PABB component region spans residues 436-910 (IFMELFGKNR…KTRAPANAVM (475 aa)).

This sequence in the C-terminal section; belongs to the anthranilate synthase component I family.

The protein localises to the plastid. The protein resides in the chloroplast. It catalyses the reaction chorismate + L-glutamine = 4-amino-4-deoxychorismate + L-glutamate. The protein operates within cofactor biosynthesis; tetrahydrofolate biosynthesis; 4-aminobenzoate from chorismate: step 1/2. Its activity is regulated as follows. Activated by chorismate and inhibited by dihydrofolate and methotrexate. In terms of biological role, bifunctional enzyme that catalyzes the biosynthesis of 4-amino-4-deoxychorismate (ADC) from chorismate and glutamine. In the first step, a glutamine amidotransferase generates ammonia that is channelled between the binding sites of glutamine and chorismate and used along with chorismate in the second step, catalyzed by aminodeoxychorismate synthase, to produce ADC. Required for the synthesis of 4-aminobenzoate (PABA), an important component in tetrahydrofolate biosynthesis. Does not possess ADC lyase activity. The chain is Aminodeoxychorismate synthase, chloroplastic (ADCS) from Arabidopsis thaliana (Mouse-ear cress).